The chain runs to 224 residues: Small ribosomal subunit protein uS3 (224 aa).

In terms of domain architecture, KH type-2 spans 38–106 (LREYVKEKLG…EVYLNVVEVR (69 aa)).

The protein belongs to the universal ribosomal protein uS3 family. In terms of assembly, part of the 30S ribosomal subunit. Forms a tight complex with proteins S10 and S14.

Binds the lower part of the 30S subunit head. Binds mRNA in the 70S ribosome, positioning it for translation. The polypeptide is Small ribosomal subunit protein uS3 (Anaeromyxobacter sp. (strain Fw109-5)).